Reading from the N-terminus, the 221-residue chain is Alpha-ketoglutarate-dependent dioxygenase alkB homolog 7, mitochondrial (221 aa).

The N-terminal 23 residues, 1–23, are a transit peptide targeting the mitochondrion; the sequence is MAGSRRLAMRLLSGCAWVRGSDS. 2 residues coordinate Fe cation: His-121 and Asp-123. Position 165 (Tyr-165) interacts with 2-oxoglutarate. Residue His-177 participates in Fe cation binding. 2-oxoglutarate-binding positions include 197–199 and Arg-203; that span reads RIS.

It belongs to the alkB family. Requires Fe(2+) as cofactor. As to expression, widely expressed.

The protein localises to the mitochondrion matrix. Its function is as follows. May function as protein hydroxylase; can catalyze auto-hydroxylation at Leu-110 (in vitro), but this activity may be due to the absence of the true substrate. Required to induce programmed necrosis in response to DNA damage caused by cytotoxic alkylating agents. Acts by triggering the collapse of mitochondrial membrane potential and loss of mitochondrial function that leads to energy depletion and cell death. ALKBH7-mediated necrosis is probably required to prevent the accumulation of cells with DNA damage. Does not display DNA demethylase activity. Involved in fatty acid metabolism. In Mus musculus (Mouse), this protein is Alpha-ketoglutarate-dependent dioxygenase alkB homolog 7, mitochondrial (Alkbh7).